The following is a 288-amino-acid chain: Probable aquaporin PIP2-2 (288 aa).

The tract at residues 1–21 (MAKDIEASAPEGGEFSAKDYT) is disordered. 2 consecutive transmembrane segments (helical) span residues 42–62 (AVIA…ATVI) and 81–101 (GVGI…LVYC). Residues 111-113 (NPA) carry the NPA 1 motif. Transmembrane regions (helical) follow at residues 130 to 150 (VLYI…VKGF), 172 to 192 (GTGL…VFSA), and 204 to 224 (IPVL…LATI). Residues 232 to 234 (NPA) carry the NPA 2 motif. The chain crosses the membrane as a helical span at residues 254–274 (IFWVGPLIGAAIAAAYHQYVL).

Belongs to the MIP/aquaporin (TC 1.A.8) family. PIP (TC 1.A.8.11) subfamily. In terms of tissue distribution, expressed in roots, leaves and anthers.

It is found in the cell membrane. Aquaporins facilitate the transport of water and small neutral solutes across cell membranes. This Oryza sativa subsp. japonica (Rice) protein is Probable aquaporin PIP2-2 (PIP2-2).